Here is a 196-residue protein sequence, read N- to C-terminus: MAKRFGAYSRETGETRVAVEITIDGKGNAAIDTGFGFADHMLNLLAFWAGFDLNLTCRGDLEVDAHHTLEDVAICLGEAFRQALGERVGIERVGDARVPMDEALCDVVVDLSGRPYLVYREDVLPPVIAGEEKDLWREFFKSLAISARMNLHIHFVYGQNGHHLVEAAFKALGLALRRATAAHGSSRVPSTKGSLD.

Belongs to the imidazoleglycerol-phosphate dehydratase family.

The protein localises to the cytoplasm. The enzyme catalyses D-erythro-1-(imidazol-4-yl)glycerol 3-phosphate = 3-(imidazol-4-yl)-2-oxopropyl phosphate + H2O. It functions in the pathway amino-acid biosynthesis; L-histidine biosynthesis; L-histidine from 5-phospho-alpha-D-ribose 1-diphosphate: step 6/9. The protein is Imidazoleglycerol-phosphate dehydratase of Solidesulfovibrio magneticus (strain ATCC 700980 / DSM 13731 / RS-1) (Desulfovibrio magneticus).